The primary structure comprises 247 residues: UPF0309 protein LMOf2365_2617 (247 aa).

The region spanning 31–214 (VAESIENDGV…ETMVNDNFTP (184 aa)) is the SIS domain.

The protein belongs to the UPF0309 family.

This is UPF0309 protein LMOf2365_2617 from Listeria monocytogenes serotype 4b (strain F2365).